We begin with the raw amino-acid sequence, 270 residues long: 3-phenylpropionate-dihydrodiol/cinnamic acid-dihydrodiol dehydrogenase (270 aa).

Position 10 to 34 (10 to 34 (FITGGGSGLGLALVERFIEEGAQVA)) interacts with NAD(+). Ser-143 contributes to the substrate binding site. The active-site Proton acceptor is Tyr-156.

This sequence belongs to the short-chain dehydrogenases/reductases (SDR) family.

It carries out the reaction 3-(cis-5,6-dihydroxycyclohexa-1,3-dien-1-yl)propanoate + NAD(+) = 3-(2,3-dihydroxyphenyl)propanoate + NADH + H(+). It catalyses the reaction (2E)-3-(cis-5,6-dihydroxycyclohexa-1,3-dien-1-yl)prop-2-enoate + NAD(+) = (2E)-3-(2,3-dihydroxyphenyl)prop-2-enoate + NADH + H(+). It functions in the pathway aromatic compound metabolism; 3-phenylpropanoate degradation. Converts 3-phenylpropionate-dihydrodiol (PP-dihydrodiol) and cinnamic acid-dihydrodiol (CI-dihydrodiol) into 3-(2,3-dihydroxylphenyl)propanoic acid (DHPP) and 2,3-dihydroxicinnamic acid (DHCI), respectively. The chain is 3-phenylpropionate-dihydrodiol/cinnamic acid-dihydrodiol dehydrogenase from Shigella sonnei (strain Ss046).